The sequence spans 658 residues: Protein CFAP20DC (658 aa).

2 disordered regions span residues 312 to 522 (QQGE…EEEY) and 589 to 634 (PVNQ…LDSS). Residues 319–328 (SHPVKQTTPL) are compositionally biased toward polar residues. Over residues 339-349 (PPRDPSADKGS) the composition is skewed to basic and acidic residues. 2 stretches are compositionally biased toward low complexity: residues 351-363 (RRGL…SGSR) and 417-434 (SSGP…LLLD). Positions 494–506 (DPKEDSRVTKGDT) are enriched in basic and acidic residues. Positions 507-521 (ELEDDFYGSDSSEEE) are enriched in acidic residues. Over residues 625–634 (QPLEQSLDSS) the composition is skewed to polar residues.

This Rattus norvegicus (Rat) protein is Protein CFAP20DC.